A 186-amino-acid polypeptide reads, in one-letter code: Golgi apparatus membrane protein-like protein ECHIDNA (186 aa).

M1 is modified (N-acetylmethionine). 3 helical membrane passes run 35-55 (ILSALFFNSFVIIFVVTVLLA), 108-128 (FWWTLYLAAAAWFILGVFSLI), and 132-152 (ADYLLVVGVCLSLNVANIIGF).

It belongs to the TVP23 family. Component of a trans-Golgi network (TGN)-localized ECH/YIP4 complex made of ECH, YIP4A and YIP4B. Interacts directly with YIP4A and YIP4B.

Its subcellular location is the golgi apparatus. It localises to the trans-Golgi network membrane. It is found in the early endosome membrane. Its function is as follows. Mediates trans-Golgi-network trafficking and cell elongation. Required for keeping the appropriate balance between secretory trafficking and vacuolar targeting of a subset of proteins. The ECH/YIP4 complex is involved in the modulation of the trans-Golgi network (TGN)-mediated trafficking of some proteins and cell wall components (e.g. pectin and hemicellulose) to the cell wall in dark-grown hypocotyls and in secretory cells of the seed coat. The protein is Golgi apparatus membrane protein-like protein ECHIDNA of Arabidopsis thaliana (Mouse-ear cress).